The primary structure comprises 426 residues: Probable imidazolonepropionase (426 aa).

2 residues coordinate 4-imidazolone-5-propanoate: Tyr-159 and His-192. Residue Tyr-159 participates in N-formimidoyl-L-glutamate binding. Residue His-260 participates in Fe(3+) binding. His-260 lines the Zn(2+) pocket. Residue Glu-263 participates in 4-imidazolone-5-propanoate binding. Asp-334 contacts Fe(3+). Asp-334 serves as a coordination point for Zn(2+). Asn-336 provides a ligand contact to N-formimidoyl-L-glutamate.

Belongs to the metallo-dependent hydrolases superfamily. HutI family. It depends on Zn(2+) as a cofactor. Requires Fe(3+) as cofactor.

It catalyses the reaction 4-imidazolone-5-propanoate + H2O = N-formimidoyl-L-glutamate. It functions in the pathway amino-acid degradation; L-histidine degradation into L-glutamate; N-formimidoyl-L-glutamate from L-histidine: step 3/3. The sequence is that of Probable imidazolonepropionase (AMDHD1) from Bos taurus (Bovine).